A 290-amino-acid chain; its full sequence is MASSMAATATLSPPVLSAERPTVRGGLFLPPSPATSRSLRLQSARRCGISPATRKPRSLPRAAKVVVAVKADPLKVMIAGAPASGKGTQCELIKSKYGLVHISAGDLLRAEIAAGSENGKRAKEFMEKGQLVPDEIVVNMVKERLLQPDAQEKGWLLDGYPRSYSQAMALETLNIRPDIFILLDVPDELLVERVVGRRLDPVTGKIYHLKYSPPENEEIASRLTQRFDDTEEKVKLRLQTHYQNVESLLSIYEDVIVEVKGDALVDDVFAEIDKQLTSSLDKKTEMVASA.

Residues 1-10 show a composition bias toward low complexity; sequence MASSMAATAT. Residues 1 to 37 are disordered; sequence MASSMAATATLSPPVLSAERPTVRGGLFLPPSPATSR. The transit peptide at 1 to 61 directs the protein to the chloroplast; that stretch reads MASSMAATAT…ATRKPRSLPR (61 aa). 83–88 is a binding site for ATP; that stretch reads ASGKGT. Residues 103–132 are NMP; it reads SAGDLLRAEIAAGSENGKRAKEFMEKGQLV. AMP-binding positions include Arg109, 130–132, 159–162, and Gln166; these read QLV and GYPR. ATP is bound by residues Arg193, Arg197, and 206–207; that span reads IY. An LID region spans residues 196–229; it reads GRRLDPVTGKIYHLKYSPPENEEIASRLTQRFDD. Residues Arg226 and Arg237 each contribute to the AMP site.

It belongs to the adenylate kinase family.

The protein resides in the plastid. It localises to the chloroplast. It catalyses the reaction AMP + ATP = 2 ADP. Catalyzes the reversible transfer of the terminal phosphate group between ATP and AMP. Plays an important role in cellular energy homeostasis and in adenine nucleotide metabolism. This chain is Probable adenylate kinase 2, chloroplastic, found in Oryza sativa subsp. japonica (Rice).